Reading from the N-terminus, the 92-residue chain is Late cornified envelope protein 3E (92 aa).

Over residues 1 to 10 the composition is skewed to low complexity; it reads MSCQQNQKQC. Disordered stretches follow at residues 1 to 22 and 64 to 92; these read MSCQ…PKCP and RRQR…GGCC. Pro residues predominate over residues 11-22; it reads QPPPKCPSPKCP. Over residues 76 to 92 the composition is skewed to gly residues; the sequence is GQQGGGSGCCHGSGGCC.

This sequence belongs to the LCE family. As to quaternary structure, interacts with CYSRT1. In terms of tissue distribution, skin-specific. Expression was readily detected in adult trunk skin, adult arm skin, fetal skin, penal skin, vulva, esophagus and tongue. Not expressed in the cervix, rectum, lung, colon, or placenta.

Precursors of the cornified envelope of the stratum corneum. This chain is Late cornified envelope protein 3E (LCE3E), found in Homo sapiens (Human).